Reading from the N-terminus, the 131-residue chain is MKCPVCHQGEMVSGIKDIPYTFRGRKTVLKGIHGLYCVHCEESIMNKEESDAFMAQVKAFRASVNAETVAPEFIVKVRKKLSLTQKEASEIFGGGVNAFSRYEKGNAQPHPSTIKLLRVLDKHPELLNEIR.

Residues Cys3, Cys6, Cys37, and Cys40 each contribute to the Zn(2+) site. Residues 74–127 (IVKVRKKLSLTQKEASEIFGGGVNAFSRYEKGNAQPHPSTIKLLRVLDKHPELL) form the HTH cro/C1-type domain. The H-T-H motif DNA-binding region spans 85–104 (QKEASEIFGGGVNAFSRYEK).

As to quaternary structure, homodimer. Crystallizes as a heterotetramer with MqsA, MqsR-MqsA(2)-MqsR. Purifies as a probable heterohexamer of 2 MqsR dimers and 1 MqsA dimer. Binds promoter DNA as a dimer. When the 2 dissociate the MsqR mRNA interferase becomes active. Zn(2+) is required as a cofactor. Post-translationally, degraded in the presence of oxidative stress, maybe by the Lon and/or ClpX proteases.

Its function is as follows. Antitoxin component of a type II toxin-antitoxin (TA) system. Labile antitoxin that binds to the MqsR mRNA interferase toxin and neutralizes its endoribonuclease activity. Overexpression prevents MqsR-mediated cessation of cell growth and inhibition of cell proliferation. Initially reported to act as a cotranscription factor with MqsA. Following further experiments, the MqsR-MqsA complex does not bind DNA and all reported data are actually due to a small fraction of free MqsA alone binding DNA. Addition of MqsR to a preformed MqsA-promoter DNA complex causes dissociation of the MqsA-DNA complex, probably causing derepression of MqsA-repressed transcripts. MqsA binds to 2 palindromes in the promoter region of the mqsRA operon activating its transcription. Binds to other promoters, inducing mcbR and spy and repressing cspD among others. Binds to and represses the rpoS promoter, the master stress regulator, resulting in decreased cyclic-di-GMP, reduced stress resistance, increased cell motility and decreased biofilm formation; in these experiments 5 TA systems are missing (lacks MazEF, RelEB, ChpB, YoeB-YefM, YafQ-DinJ). An earlier study showed overexpression alone increases biofilm formation, perhaps by repressing cspD; in these experiments the 5 TA systems are present. Represses the csgD promoter. In the presence of stress, when this protein is degraded, the promoters it represses are derepressed, leading to biofilm formation. This TA system mediates cell growth during bile acid deoxycholate stress by degrading mRNA for probable deoxycholate-binding protein YgiS; bile acid detergents such as deoxycholate are important for host defense against bacterial growth in the gall bladder and duodenum. The chain is Antitoxin MqsA from Escherichia coli (strain K12).